Consider the following 159-residue polypeptide: Bacterioferritin (159 aa).

Residues 1-145 (MQGDPEVLRL…TQLELMDKLG (145 aa)) enclose the Ferritin-like diiron domain. Positions 18 and 51 each coordinate Fe cation. Position 52 (methionine 52) interacts with heme b. Residues histidine 54, glutamate 94, glutamate 127, and histidine 130 each coordinate Fe cation.

It belongs to the bacterioferritin family. In terms of assembly, homooligomer of 24 subunits, arranged as 12 dimers, that are packed together to form an approximately spherical molecule with a central cavity, in which large amounts of iron can be deposited. Requires heme b as cofactor.

The enzyme catalyses 4 Fe(2+) + O2 + 4 H(+) = 4 Fe(3+) + 2 H2O. The catalysed reaction is Fe(2+)(in) = Fe(2+)(out). Its function is as follows. Iron-storage protein, whose ferroxidase center binds Fe(2+), oxidizes it using dioxygen to Fe(3+), and participates in the subsequent Fe(3+) oxide mineral core formation within the central cavity of the BFR protein shell. This is Bacterioferritin (bfr) from Mycolicibacterium paratuberculosis (strain ATCC BAA-968 / K-10) (Mycobacterium paratuberculosis).